The following is a 300-amino-acid chain: UDP-3-O-acyl-N-acetylglucosamine deacetylase (300 aa).

H78, H237, and D241 together coordinate Zn(2+). H264 serves as the catalytic Proton donor.

Belongs to the LpxC family. It depends on Zn(2+) as a cofactor.

It carries out the reaction a UDP-3-O-[(3R)-3-hydroxyacyl]-N-acetyl-alpha-D-glucosamine + H2O = a UDP-3-O-[(3R)-3-hydroxyacyl]-alpha-D-glucosamine + acetate. Its pathway is glycolipid biosynthesis; lipid IV(A) biosynthesis; lipid IV(A) from (3R)-3-hydroxytetradecanoyl-[acyl-carrier-protein] and UDP-N-acetyl-alpha-D-glucosamine: step 2/6. Catalyzes the hydrolysis of UDP-3-O-myristoyl-N-acetylglucosamine to form UDP-3-O-myristoylglucosamine and acetate, the committed step in lipid A biosynthesis. The sequence is that of UDP-3-O-acyl-N-acetylglucosamine deacetylase from Acinetobacter baumannii (strain AB307-0294).